Reading from the N-terminus, the 402-residue chain is CCA-adding enzyme (402 aa).

The ATP site is built by glycine 32 and arginine 35. CTP contacts are provided by glycine 32 and arginine 35. Aspartate 45 and aspartate 47 together coordinate Mg(2+). Residues arginine 116, aspartate 159, arginine 162, arginine 165, and arginine 168 each coordinate ATP. Positions 116, 159, 162, 165, and 168 each coordinate CTP.

This sequence belongs to the tRNA nucleotidyltransferase/poly(A) polymerase family. Bacterial CCA-adding enzyme type 3 subfamily. In terms of assembly, homodimer. It depends on Mg(2+) as a cofactor.

The catalysed reaction is a tRNA precursor + 2 CTP + ATP = a tRNA with a 3' CCA end + 3 diphosphate. It carries out the reaction a tRNA with a 3' CCA end + 2 CTP + ATP = a tRNA with a 3' CCACCA end + 3 diphosphate. Functionally, catalyzes the addition and repair of the essential 3'-terminal CCA sequence in tRNAs without using a nucleic acid template. Adds these three nucleotides in the order of C, C, and A to the tRNA nucleotide-73, using CTP and ATP as substrates and producing inorganic pyrophosphate. tRNA 3'-terminal CCA addition is required both for tRNA processing and repair. Also involved in tRNA surveillance by mediating tandem CCA addition to generate a CCACCA at the 3' terminus of unstable tRNAs. While stable tRNAs receive only 3'-terminal CCA, unstable tRNAs are marked with CCACCA and rapidly degraded. The chain is CCA-adding enzyme from Streptococcus agalactiae serotype III (strain NEM316).